The chain runs to 509 residues: Activin receptor type-1 (509 aa).

The first 20 residues, 1–20, serve as a signal peptide directing secretion; the sequence is MVDGVMILPVLVMIAFPFPS. Residues 21 to 123 lie on the Extracellular side of the membrane; sequence MEDEKPKVNP…FPGTQNFHLE (103 aa). N102 carries N-linked (GlcNAc...) asparagine glycosylation. The helical transmembrane segment at 124-146 threads the bilayer; the sequence is VGLIILSVVFAVCLLACLLGVAL. Residues 147 to 509 lie on the Cytoplasmic side of the membrane; that stretch reads RKFKRRNQER…NSLDKLKTDC (363 aa). Residues 178–207 form the GS domain; sequence STLADLLDHSCTSGSGSGLPFLVQRTVARQ. The 295-residue stretch at 208–502 folds into the Protein kinase domain; the sequence is ITLLECVGKG…KTLTKIDNSL (295 aa). ATP is bound by residues 214–222 and K235; that span reads VGKGRYGEV. The active-site Proton acceptor is D336. S501 is modified (phosphoserine).

The protein belongs to the protein kinase superfamily. TKL Ser/Thr protein kinase family. TGFB receptor subfamily. Interacts with FKBP1A. Interacts with FCHO1. Interacts with CLU. Interacts with type II receptors AMHR2 and ACVR2A. Interacts with BMP7. Interacts with BMP9. Interacts with BMP6 (when glycosylated); the interaction may induce HAMP expression. Interacts with TSC22D1/TSC-22. Mg(2+) serves as cofactor. Mn(2+) is required as a cofactor.

It is found in the membrane. It carries out the reaction L-threonyl-[receptor-protein] + ATP = O-phospho-L-threonyl-[receptor-protein] + ADP + H(+). The enzyme catalyses L-seryl-[receptor-protein] + ATP = O-phospho-L-seryl-[receptor-protein] + ADP + H(+). Bone morphogenetic protein (BMP) type I receptor that is involved in a wide variety of biological processes, including bone, heart, cartilage, nervous, and reproductive system development and regulation. As a type I receptor, forms heterotetrameric receptor complexes with the type II receptors AMHR2, ACVR2A ors ACVR2B. Upon binding of ligands such as BMP7 or BMP9 to the heteromeric complexes, type II receptors transphosphorylate ACVR1 intracellular domain. In turn, ACVR1 kinase domain is activated and subsequently phosphorylates SMAD1/5/8 proteins that transduce the signal. In addition to its role in mediating BMP pathway-specific signaling, suppresses TGFbeta/activin pathway signaling by interfering with the binding of activin to its type II receptor. Besides canonical SMAD signaling, can activate non-canonical signaling pathways. May promote the expression of HAMP, potentially via its interaction with BMP6. This Bos taurus (Bovine) protein is Activin receptor type-1 (ACVR1).